A 187-amino-acid chain; its full sequence is UPF0301 protein KPN78578_33170 (187 aa).

The protein belongs to the UPF0301 (AlgH) family.

The sequence is that of UPF0301 protein KPN78578_33170 from Klebsiella pneumoniae subsp. pneumoniae (strain ATCC 700721 / MGH 78578).